The sequence spans 260 residues: Large ribosomal subunit protein uL2y (260 aa).

The tract at residues 227-248 is disordered; it reads RRDKSAGAKVGQIAARRTGRRR.

It belongs to the universal ribosomal protein uL2 family.

This chain is Large ribosomal subunit protein uL2y (RPL8B), found in Arabidopsis thaliana (Mouse-ear cress).